Reading from the N-terminus, the 177-residue chain is ATP synthase subunit delta (177 aa).

Belongs to the ATPase delta chain family. As to quaternary structure, F-type ATPases have 2 components, F(1) - the catalytic core - and F(0) - the membrane proton channel. F(1) has five subunits: alpha(3), beta(3), gamma(1), delta(1), epsilon(1). F(0) has three main subunits: a(1), b(2) and c(10-14). The alpha and beta chains form an alternating ring which encloses part of the gamma chain. F(1) is attached to F(0) by a central stalk formed by the gamma and epsilon chains, while a peripheral stalk is formed by the delta and b chains.

Its subcellular location is the cell inner membrane. Functionally, f(1)F(0) ATP synthase produces ATP from ADP in the presence of a proton or sodium gradient. F-type ATPases consist of two structural domains, F(1) containing the extramembraneous catalytic core and F(0) containing the membrane proton channel, linked together by a central stalk and a peripheral stalk. During catalysis, ATP synthesis in the catalytic domain of F(1) is coupled via a rotary mechanism of the central stalk subunits to proton translocation. Its function is as follows. This protein is part of the stalk that links CF(0) to CF(1). It either transmits conformational changes from CF(0) to CF(1) or is implicated in proton conduction. In Vibrio parahaemolyticus serotype O3:K6 (strain RIMD 2210633), this protein is ATP synthase subunit delta.